A 325-amino-acid chain; its full sequence is Histone deacetylase 8 (325 aa).

Positions 1 to 272 (MSRVVKPKVA…WTYLTALIVG (272 aa)) are histone deacetylase. Residue D49 coordinates substrate. Catalysis depends on H91, which acts as the Proton acceptor. Residue G99 coordinates substrate. D126, H128, and D215 together coordinate a divalent metal cation. Y254 provides a ligand contact to substrate.

Belongs to the histone deacetylase family. HD type 1 subfamily. A divalent metal cation serves as cofactor.

The protein localises to the nucleus. It is found in the chromosome. It localises to the cytoplasm. It carries out the reaction N(6)-acetyl-L-lysyl-[histone] + H2O = L-lysyl-[histone] + acetate. It catalyses the reaction N(6)-acetyl-L-lysyl-[protein] + H2O = L-lysyl-[protein] + acetate. The catalysed reaction is N(6)-(2E)-butenoyl-L-lysyl-[protein] + H2O = (2E)-2-butenoate + L-lysyl-[protein]. Its activity is regulated as follows. Its activity is inhibited by trichostatin A (TSA) and butyrate, 2 well known histone deacetylase inhibitors. Histone deacetylase that catalyzes the deacetylation of lysine residues on the N-terminal part of the core histones (H2A, H2B, H3 and H4). Histone deacetylation gives a tag for epigenetic repression and plays an important role in transcriptional regulation, cell cycle progression and developmental events. Histone deacetylases act via the formation of large multiprotein complexes. Also involved in the deacetylation of non-histone proteins. In addition to protein deacetylase activity, also has protein-lysine deacylase activity: acts as a protein decrotonylase by mediating decrotonylation ((2E)-butenoyl) of histones. The chain is Histone deacetylase 8 (hdac8) from Xenopus laevis (African clawed frog).